The chain runs to 167 residues: Small ribosomal subunit protein uS5 (167 aa).

Residues 11-74 enclose the S5 DRBM domain; that stretch reads LQEKLIAVNR…DKARRNMTTI (64 aa).

The protein belongs to the universal ribosomal protein uS5 family. In terms of assembly, part of the 30S ribosomal subunit. Contacts proteins S4 and S8.

In terms of biological role, with S4 and S12 plays an important role in translational accuracy. Its function is as follows. Located at the back of the 30S subunit body where it stabilizes the conformation of the head with respect to the body. This is Small ribosomal subunit protein uS5 from Baumannia cicadellinicola subsp. Homalodisca coagulata.